The sequence spans 380 residues: 1-deoxy-D-xylulose 5-phosphate reductoisomerase (380 aa).

The NADPH site is built by T10, G11, S12, I13, G35, R36, N37, and N121. K122 contacts 1-deoxy-D-xylulose 5-phosphate. E123 contributes to the NADPH binding site. Residue D147 participates in Mn(2+) binding. Residues S148, E149, S173, and H196 each contribute to the 1-deoxy-D-xylulose 5-phosphate site. E149 provides a ligand contact to Mn(2+). G202 is a binding site for NADPH. Positions 209, 214, 215, and 218 each coordinate 1-deoxy-D-xylulose 5-phosphate. Residue E218 participates in Mn(2+) binding.

It belongs to the DXR family. The cofactor is Mg(2+). Mn(2+) serves as cofactor.

It catalyses the reaction 2-C-methyl-D-erythritol 4-phosphate + NADP(+) = 1-deoxy-D-xylulose 5-phosphate + NADPH + H(+). It functions in the pathway isoprenoid biosynthesis; isopentenyl diphosphate biosynthesis via DXP pathway; isopentenyl diphosphate from 1-deoxy-D-xylulose 5-phosphate: step 1/6. Functionally, catalyzes the NADPH-dependent rearrangement and reduction of 1-deoxy-D-xylulose-5-phosphate (DXP) to 2-C-methyl-D-erythritol 4-phosphate (MEP). The protein is 1-deoxy-D-xylulose 5-phosphate reductoisomerase of Agathobacter rectalis (strain ATCC 33656 / DSM 3377 / JCM 17463 / KCTC 5835 / VPI 0990) (Eubacterium rectale).